The primary structure comprises 270 residues: tRNA pseudouridine synthase A (270 aa).

Catalysis depends on Asp52, which acts as the Nucleophile. Substrate is bound at residue Tyr110.

This sequence belongs to the tRNA pseudouridine synthase TruA family. Homodimer.

It catalyses the reaction uridine(38/39/40) in tRNA = pseudouridine(38/39/40) in tRNA. Formation of pseudouridine at positions 38, 39 and 40 in the anticodon stem and loop of transfer RNAs. The sequence is that of tRNA pseudouridine synthase A from Paraburkholderia phytofirmans (strain DSM 17436 / LMG 22146 / PsJN) (Burkholderia phytofirmans).